The primary structure comprises 609 residues: Pentatricopeptide repeat-containing protein At5g13770, chloroplastic (609 aa).

Residues 1 to 44 constitute a chloroplast transit peptide; it reads MAIASGSWVATVNHHANPHSFTSPTKPIFFLSQKPHNFHVCSSR. 13 PPR repeats span residues 103 to 137, 138 to 168, 172 to 207, 208 to 242, 247 to 281, 282 to 316, 317 to 351, 352 to 386, 387 to 421, 422 to 456, 457 to 491, 492 to 526, and 527 to 561; these read ELRTTKHLISYLVSSKSWDLLVSVCEDLREHKALP, DGQTCSNLIRSCIRDRKFRITHCLLSVFRSD, AVSASDAAMKGFNKLQMYSSTIQVFDRLKQSVGVEP, SPGCYCRIMEAHEKIGENHKVVELFQEFKSQRLSF, SGSIYTIVCSSLAKSGRAFEALEVLEEMKDKGIPE, SSELYSMLIRAFAEAREVVITEKLFKEAGGKKLLK, DPEMCLKVVLMYVREGNMETTLEVVAAMRKAELKV, TDCILCAIVNGFSKQRGFAEAVKVYEWAMKEECEA, GQVTYAIAINAYCRLEKYNKAEMLFDEMVKKGFDK, CVVAYSNIMDMYGKTRRLSDAVRLMAKMKQRGCKP, NIWIYNSLIDMHGRAMDLRRAEKIWKEMKRAKVLP, DKVSYTSMISAYNRSKELERCVELYQEFRMNRGKI, and DRAMAGIMVGVFSKTSRIDELMRLLQDMKVEGTRL.

The protein belongs to the PPR family. P subfamily.

It is found in the plastid. It localises to the chloroplast. The chain is Pentatricopeptide repeat-containing protein At5g13770, chloroplastic from Arabidopsis thaliana (Mouse-ear cress).